Reading from the N-terminus, the 167-residue chain is Large ribosomal subunit protein uL10 (167 aa).

This sequence belongs to the universal ribosomal protein uL10 family. Part of the ribosomal stalk of the 50S ribosomal subunit. The N-terminus interacts with L11 and the large rRNA to form the base of the stalk. The C-terminus forms an elongated spine to which L12 dimers bind in a sequential fashion forming a multimeric L10(L12)X complex.

Forms part of the ribosomal stalk, playing a central role in the interaction of the ribosome with GTP-bound translation factors. This chain is Large ribosomal subunit protein uL10, found in Streptococcus thermophilus (strain CNRZ 1066).